Reading from the N-terminus, the 356-residue chain is MKTLLVMAGGTGGHIFPGIAVAEALRAKGWRIVWMGNPDGMEARIVPSRGYDTAWVRFGALRGKGLVRKLLLPVNLLVGFWQALGQLRRIKPDVVLGMGGYITFPGGMMAALLGWPLVLHEQNSVAGLANRVLAGVADRVLSGFPSVLKKAGWVGNPVREDIASVAAPAARFAGRSGPLNVLVVGGSLGAAVLNDTVPKALARIPLEFRPQVVHQAGEKQIDALRAAYAAAGVEGDLRPFIQDMAAAYAGADLVICRAGALTVAELAAVGVASLLVPFPHAVDDHQTGNARFLAEHGGAYLLPQNELDAERLAGILASLDRPQLLQMAEHARAQAKPRATEAVARACEELAEGRKA.

Residues 11–13 (TGG), asparagine 123, arginine 159, serine 187, isoleucine 241, 260–265 (ALTVAE), and glutamine 286 contribute to the UDP-N-acetyl-alpha-D-glucosamine site.

Belongs to the glycosyltransferase 28 family. MurG subfamily.

The protein localises to the cell inner membrane. It catalyses the reaction di-trans,octa-cis-undecaprenyl diphospho-N-acetyl-alpha-D-muramoyl-L-alanyl-D-glutamyl-meso-2,6-diaminopimeloyl-D-alanyl-D-alanine + UDP-N-acetyl-alpha-D-glucosamine = di-trans,octa-cis-undecaprenyl diphospho-[N-acetyl-alpha-D-glucosaminyl-(1-&gt;4)]-N-acetyl-alpha-D-muramoyl-L-alanyl-D-glutamyl-meso-2,6-diaminopimeloyl-D-alanyl-D-alanine + UDP + H(+). The protein operates within cell wall biogenesis; peptidoglycan biosynthesis. Functionally, cell wall formation. Catalyzes the transfer of a GlcNAc subunit on undecaprenyl-pyrophosphoryl-MurNAc-pentapeptide (lipid intermediate I) to form undecaprenyl-pyrophosphoryl-MurNAc-(pentapeptide)GlcNAc (lipid intermediate II). The sequence is that of UDP-N-acetylglucosamine--N-acetylmuramyl-(pentapeptide) pyrophosphoryl-undecaprenol N-acetylglucosamine transferase from Azoarcus sp. (strain BH72).